The following is a 129-amino-acid chain: Protein HMF1 (129 aa).

Lys-52 participates in a covalent cross-link: Glycyl lysine isopeptide (Lys-Gly) (interchain with G-Cter in ubiquitin).

Belongs to the RutC family.

It localises to the cytoplasm. The protein localises to the nucleus. It is found in the mitochondrion intermembrane space. This chain is Protein HMF1 (HMF1), found in Saccharomyces cerevisiae (strain ATCC 204508 / S288c) (Baker's yeast).